A 60-amino-acid chain; its full sequence is MSAIAPITGTIRKRILADITIGFAIGGAMASYWWWGFHKNIINKREAYYAKLAEQKAAEN.

Residues Met1–Ile15 lie on the Mitochondrial matrix side of the membrane. The helical transmembrane segment at Leu16–His38 threads the bilayer. The Mitochondrial intermembrane segment spans residues Lys39 to Ala57. Positions Ala58–Asn60 are cleaved as a propeptide — removed in mature form.

The protein belongs to the fungal cytochrome c oxidase subunit 7a family. As to quaternary structure, component of the cytochrome c oxidase (complex IV, CIV), a multisubunit enzyme composed of a catalytic core of 3 subunits and several supernumerary subunits. The complex exists as a monomer or a dimer and forms supercomplexes (SCs) in the inner mitochondrial membrane with ubiquinol-cytochrome c oxidoreductase (cytochrome b-c1 complex, complex III, CIII).

It is found in the mitochondrion inner membrane. Its pathway is energy metabolism; oxidative phosphorylation. Component of the cytochrome c oxidase, the last enzyme in the mitochondrial electron transport chain which drives oxidative phosphorylation. The respiratory chain contains 3 multisubunit complexes succinate dehydrogenase (complex II, CII), ubiquinol-cytochrome c oxidoreductase (cytochrome b-c1 complex, complex III, CIII) and cytochrome c oxidase (complex IV, CIV), that cooperate to transfer electrons derived from NADH and succinate to molecular oxygen, creating an electrochemical gradient over the inner membrane that drives transmembrane transport and the ATP synthase. Cytochrome c oxidase is the component of the respiratory chain that catalyzes the reduction of oxygen to water. Electrons originating from reduced cytochrome c in the intermembrane space (IMS) are transferred via the dinuclear copper A center (CU(A)) of subunit 2 and heme A of subunit 1 to the active site in subunit 1, a binuclear center (BNC) formed by heme A3 and copper B (CU(B)). The BNC reduces molecular oxygen to 2 water molecules using 4 electrons from cytochrome c in the IMS and 4 protons from the mitochondrial matrix. This is Cytochrome c oxidase subunit 9, mitochondrial (COX9) from Kluyveromyces lactis (strain ATCC 8585 / CBS 2359 / DSM 70799 / NBRC 1267 / NRRL Y-1140 / WM37) (Yeast).